The following is a 692-amino-acid chain: Elongation factor G (692 aa).

A tr-type G domain is found at 8 to 283 (EDYRNFGIMA…AVVDYLPSPV (276 aa)). Residues 17–24 (AHIDAGKT), 81–85 (DTPGH), and 135–138 (NKMD) each bind GTP.

This sequence belongs to the TRAFAC class translation factor GTPase superfamily. Classic translation factor GTPase family. EF-G/EF-2 subfamily.

It is found in the cytoplasm. Functionally, catalyzes the GTP-dependent ribosomal translocation step during translation elongation. During this step, the ribosome changes from the pre-translocational (PRE) to the post-translocational (POST) state as the newly formed A-site-bound peptidyl-tRNA and P-site-bound deacylated tRNA move to the P and E sites, respectively. Catalyzes the coordinated movement of the two tRNA molecules, the mRNA and conformational changes in the ribosome. The polypeptide is Elongation factor G (Caulobacter vibrioides (strain ATCC 19089 / CIP 103742 / CB 15) (Caulobacter crescentus)).